The following is a 195-amino-acid chain: Protein SYM1 (195 aa).

The next 4 helical transmembrane spans lie at 17 to 39 (LITN…QFFF), 59 to 78 (RAII…WYKF), 99 to 121 (STLL…PLYY), and 168 to 190 (PVQF…LSYV).

Belongs to the peroxisomal membrane protein PXMP2/4 family.

The protein localises to the mitochondrion inner membrane. In terms of biological role, may be involved in cellular response to stress. Required to maintain mitochondrial DNA (mtDNA) integrity and stability. The polypeptide is Protein SYM1 (SYM1) (Candida albicans (strain SC5314 / ATCC MYA-2876) (Yeast)).